The chain runs to 610 residues: Pentatricopeptide repeat-containing protein At5g40400 (610 aa).

PPR repeat units lie at residues 165-199 (DPVV…GFSV), 200-234 (SVVT…GIHP), 235-269 (NTYT…GFEP), 270-304 (DLVT…RVVP), 305-339 (DLVT…GIKP), 340-374 (DCMS…SVVP), 375-409 (DRFT…KVDI), 410-445 (PFEV…GHEA), 446-480 (KPET…NQVL), 481-515 (DAKT…EVKP), 516-546 (DSFI…FAME), and 551-586 (DPES…GFVP).

It belongs to the PPR family. P subfamily.

The protein is Pentatricopeptide repeat-containing protein At5g40400 of Arabidopsis thaliana (Mouse-ear cress).